Reading from the N-terminus, the 72-residue chain is Translation initiation factor IF-1 (72 aa).

The S1-like domain maps to 1–72 (MSKEENIEMQ…TKGRIIFRSR (72 aa)).

Belongs to the IF-1 family. In terms of assembly, component of the 30S ribosomal translation pre-initiation complex which assembles on the 30S ribosome in the order IF-2 and IF-3, IF-1 and N-formylmethionyl-tRNA(fMet); mRNA recruitment can occur at any time during PIC assembly.

It localises to the cytoplasm. Functionally, one of the essential components for the initiation of protein synthesis. Stabilizes the binding of IF-2 and IF-3 on the 30S subunit to which N-formylmethionyl-tRNA(fMet) subsequently binds. Helps modulate mRNA selection, yielding the 30S pre-initiation complex (PIC). Upon addition of the 50S ribosomal subunit IF-1, IF-2 and IF-3 are released leaving the mature 70S translation initiation complex. The polypeptide is Translation initiation factor IF-1 (Buchnera aphidicola subsp. Acyrthosiphon pisum (strain APS) (Acyrthosiphon pisum symbiotic bacterium)).